The following is a 708-amino-acid chain: B-cell lymphoma 6 protein homolog (708 aa).

One can recognise a BTB domain in the interval 32–99; the sequence is TDVVIIVNRE…MYTSRLNLRE (68 aa). Residues 303-317 are compositionally biased toward basic and acidic residues; sequence AKEEERTSSEDEISQ. Disordered stretches follow at residues 303–371 and 431–470; these read AKEE…KSPT and PTKM…QSPL. Polar residues-rich tracts occupy residues 333–370 and 431–454; these read SPQS…TKSP and PTKM…NIVN. 6 C2H2-type zinc fingers span residues 520–543, 548–570, 576–598, 604–626, 632–654, and 660–683; these read FFCN…LQVH, YKCD…KTVH, YRCN…TRIH, YKCE…VLIH, YPCE…LRIH, and YHCE…RQKH.

The protein localises to the nucleus. In terms of biological role, transcriptional repressor mainly required for germinal center (GC) formation and antibody affinity maturation which has different mechanisms of action specific to the lineage and biological functions. Forms complexes with different corepressors and histone deacetylases to repress the transcriptional expression of different subsets of target genes. Represses its target genes by binding directly to the DNA sequence 5'-TTCCTAGAA-3' (BCL6-binding site) or indirectly by repressing the transcriptional activity of transcription factors. In GC B-cells, represses genes that function in differentiation, inflammation, apoptosis and cell cycle control, also autoregulates its transcriptional expression and up-regulates, indirectly, the expression of some genes important for GC reactions, such as AICDA, through the repression of microRNAs expression. An important function is to allow GC B-cells to proliferate very rapidly in response to T-cell dependent antigens and tolerate the physiological DNA breaks required for immunglobulin class switch recombination and somatic hypermutation without inducing a p53/TP53-dependent apoptotic response. In follicular helper CD4(+) T-cells (T(FH) cells), promotes the expression of T(FH)-related genes but inhibits the differentiation of T(H)1, T(H)2 and T(H)17 cells. Also required for the establishment and maintenance of immunological memory for both T- and B-cells. Suppresses macrophage proliferation through competition with STAT5 for STAT-binding motifs binding on certain target genes, such as CCL2 and CCND2. In response to genotoxic stress, controls cell cycle arrest in GC B-cells in both p53/TP53-dependedent and -independent manners. Besides, also controls neurogenesis through the alteration of the composition of NOTCH-dependent transcriptional complexes at selective NOTCH targets, such as HES5, including the recruitment of the deacetylase SIRT1 and resulting in an epigenetic silencing leading to neuronal differentiation. This Gallus gallus (Chicken) protein is B-cell lymphoma 6 protein homolog.